Consider the following 95-residue polypeptide: Small ribosomal subunit protein bS6 (95 aa).

The protein belongs to the bacterial ribosomal protein bS6 family.

Binds together with bS18 to 16S ribosomal RNA. In Clostridium beijerinckii (strain ATCC 51743 / NCIMB 8052) (Clostridium acetobutylicum), this protein is Small ribosomal subunit protein bS6.